We begin with the raw amino-acid sequence, 360 residues long: MATSQIAIIVLLGLLVATNIHITEAQIGVCYGMMGNNLPSHSEVIQLYKSRNIRRLRLYDPNHGALNALRGSNIEVILGLPNVDVKHISSGMEHARWWVQKNVRDFWPHVKIKYIAVGNEISPVTGTSNLAPFQVPALVNIYKAIGEAGLGNDIKVSTSVDMTLIGNSYPPSQGSFRNDVRWFTDPIVGFLRDTRAPLLVNIYPYFSYSGNPGQISLPYALFTAPNVVVQDGSRQYRNLFDAMLDSVYAAMDRTGGGSVGIVVSESGWPSAGAFGATHENAQTYLRNLIQHAKEGSPRKPGPIETYIFAMFDENNKNPELEKHFGMFSPNKQPKYNLNFGVSERVWDITNSTASSLTSEI.

An N-terminal signal peptide occupies residues 1–25; sequence MATSQIAIIVLLGLLVATNIHITEA. The residue at position 26 (Gln26) is a Pyrrolidone carboxylic acid. The active-site Proton donor is the Glu120. The active-site Nucleophile is the Glu265. The propeptide at 341-360 is removed in mature form; that stretch reads VSERVWDITNSTASSLTSEI. N-linked (GlcNAc...) asparagine glycosylation occurs at Asn350.

The protein belongs to the glycosyl hydrolase 17 family.

It localises to the vacuole. The catalysed reaction is Hydrolysis of (1-&gt;3)-beta-D-glucosidic linkages in (1-&gt;3)-beta-D-glucans.. Its function is as follows. Implicated in the defense of plants against pathogens. In Solanum lycopersicum (Tomato), this protein is Glucan endo-1,3-beta-glucosidase B.